The sequence spans 365 residues: Testis-specific serine/threonine-protein kinase 1 (365 aa).

Residues Y12–V272 form the Protein kinase domain. ATP contacts are provided by residues L18–V26 and K41. Residue D136 is the Proton acceptor of the active site. At T174 the chain carries Phosphothreonine. The disordered stretch occupies residues G282 to T365. Residues G303–E330 are compositionally biased toward basic and acidic residues. Residues D331–E347 show a composition bias toward polar residues.

This sequence belongs to the protein kinase superfamily. CAMK Ser/Thr protein kinase family. As to quaternary structure, interacts with TSSK2. Interacts with HSP90; this interaction stabilizes TSSK1. Mg(2+) serves as cofactor. In terms of processing, autophosphorylated. Post-translationally, ubiquitinated; HSP90 activity negatively regulates ubiquitination and degradation. As to expression, testis-specific. Expressed only in postmeiotic spermatids at the final stages of cytodifferentiation in the seminiferous tubules (at protein level). Not detected in released sperms in the lumen of the seminiferous tubules and the epididymis.

It is found in the cytoplasm. The protein localises to the cytoplasmic vesicle. It localises to the secretory vesicle. The protein resides in the acrosome. Its subcellular location is the cell projection. It is found in the cilium. The protein localises to the flagellum. It carries out the reaction L-seryl-[protein] + ATP = O-phospho-L-seryl-[protein] + ADP + H(+). The catalysed reaction is L-threonyl-[protein] + ATP = O-phospho-L-threonyl-[protein] + ADP + H(+). Activated by phosphorylation on Thr-174, potentially by autophosphorylation. Testis-specific serine/threonine-protein kinase required during spermatid development. Phosphorylates 'Ser-281' of TSKS. Involved in the late stages of spermatogenesis, during the reconstruction of the cytoplasm. During spermatogenesis, required for the transformation of a ring-shaped structure around the base of the flagellum originating from the chromatoid body. The chain is Testis-specific serine/threonine-protein kinase 1 (Tssk1b) from Mus musculus (Mouse).